A 191-amino-acid chain; its full sequence is MCGPSYCTLLLIAASCYILVCSHAKSLQGTSKLDLGNHISAGSARGSLSPASPALSEARQKRAMGDYKELTDIIDELEENSLAQKASATMQVAAMPPQGQEFDLDTMPPLTYYLLLQKLRQLQSNGEPAYRVRTPRLGRSIDSWRLLDAEGATGMAGGEEAIGGQFMQRMVKKSVPFKPRLGKRAQVCGGD.

Residues 1–24 (MCGPSYCTLLLIAASCYILVCSHA) form the signal peptide. Residues 25-119 (KSLQGTSKLD…LTYYLLLQKL (95 aa)) constitute a propeptide that is removed on maturation. Leu-137 and Leu-181 each carry leucine amide. Residues 185–191 (AQVCGGD) constitute a propeptide that is removed on maturation.

This sequence belongs to the pyrokinin family. Expressed in a subgroup of neurosecretory cells in the subesophageal ganglion from embryonic stage 9 to larval stages.

The protein localises to the secreted. Functionally, probably has a role in larval molting. In Drosophila melanogaster (Fruit fly), this protein is Protein hugin (Hug).